The sequence spans 570 residues: Proline--tRNA ligase (570 aa).

This sequence belongs to the class-II aminoacyl-tRNA synthetase family. ProS type 1 subfamily. In terms of assembly, homodimer.

The protein localises to the cytoplasm. The catalysed reaction is tRNA(Pro) + L-proline + ATP = L-prolyl-tRNA(Pro) + AMP + diphosphate. Its function is as follows. Catalyzes the attachment of proline to tRNA(Pro) in a two-step reaction: proline is first activated by ATP to form Pro-AMP and then transferred to the acceptor end of tRNA(Pro). As ProRS can inadvertently accommodate and process non-cognate amino acids such as alanine and cysteine, to avoid such errors it has two additional distinct editing activities against alanine. One activity is designated as 'pretransfer' editing and involves the tRNA(Pro)-independent hydrolysis of activated Ala-AMP. The other activity is designated 'posttransfer' editing and involves deacylation of mischarged Ala-tRNA(Pro). The misacylated Cys-tRNA(Pro) is not edited by ProRS. The chain is Proline--tRNA ligase from Clostridium perfringens (strain ATCC 13124 / DSM 756 / JCM 1290 / NCIMB 6125 / NCTC 8237 / Type A).